Reading from the N-terminus, the 901-residue chain is Envelope glycoprotein B (901 aa).

The first 34 residues, 1 to 34 (MRPVRGIARSRILSCSWRGTWTSALTILYLGVYC), serve as a signal peptide directing secretion. At 35-736 (ESTTVTPTTV…GALVTFVTNP (702 aa)) the chain is on the virion surface side. N-linked (GlcNAc...) asparagine; by host glycosylation is found at Asn-53, Asn-60, and Asn-66. Disulfide bonds link Cys-84–Cys-533, Cys-101–Cys-489, Cys-174–Cys-239, and Cys-331–Cys-380. An involved in fusion and/or binding to host membrane region spans residues 141–147 (SYKYVTY). Asn-197 is a glycosylation site (N-linked (GlcNAc...) asparagine; by host). The interval 226–233 (GSVWLYKE) is involved in fusion and/or binding to host membrane. Residues Asn-270, Asn-289, Asn-328, Asn-372, Asn-398, Asn-406, Asn-436, Asn-537, Asn-571, and Asn-623 are each glycosylated (N-linked (GlcNAc...) asparagine; by host). A disulfide bridge connects residues Cys-559 and Cys-596. Hydrophobic membrane proximal region stretches follow at residues 683 to 734 (VERV…TFVT) and 714 to 734 (AVGA…TFVT). Residues 737 to 757 (FGAFVVFLFCVGCITLVITVY) traverse the membrane as a helical segment. The Intravirion portion of the chain corresponds to 758 to 901 (RRQRRAMQRP…KLNTEDDVHV (144 aa)). 2 disordered regions span residues 794 to 813 (GPEG…APYG) and 852 to 901 (DDKK…DVHV). Basic and acidic residues-rich tracts occupy residues 852-864 (DDKK…KSSK) and 872-883 (SETRRRPGIMDR). The Internalization motif motif lies at 890-893 (YQKL).

It belongs to the herpesviridae glycoprotein B family. Homotrimer; disulfide-linked. Binds to heparan sulfate proteoglycans. Interacts with gH/gL heterodimer. A proteolytic cleavage by host furin generates two subunits that remain linked by disulfide bonds.

It is found in the virion membrane. The protein localises to the host cell membrane. It localises to the host endosome membrane. The protein resides in the host Golgi apparatus membrane. Its function is as follows. Envelope glycoprotein that forms spikes at the surface of virion envelope. Essential for the initial attachment to heparan sulfate moieties of the host cell surface proteoglycans. Involved in fusion of viral and cellular membranes leading to virus entry into the host cell. Following initial binding to its host receptors, membrane fusion is mediated by the fusion machinery composed at least of gB and the heterodimer gH/gL. May be involved in the fusion between the virion envelope and the outer nuclear membrane during virion egress. This is Envelope glycoprotein B from Guinea pig cytomegalovirus (strain 22122) (GPCMV).